Here is a 492-residue protein sequence, read N- to C-terminus: RNase aCSPSF2 (492 aa).

7 residues coordinate a divalent metal cation: His130, His132, Asp134, His135, His213, Asp234, and His460.

This sequence belongs to the metallo-beta-lactamase superfamily. RNA-metabolizing metallo-beta-lactamase-like family. Requires Mg(2+) as cofactor.

Its function is as follows. A 5'-3' exoribonuclease, more active on 5'-monophosphorylated and 5'-hydroxylated RNA than 5'-tri-phosphorylated RNA; note there is no evidence for accumulation of 5'-monophosphorylated RNA in this organism. Translation initiation factor 2 subunit gamma but not subunit alpha protects 5'-tri-phosphorylated RNA from degradation by this enzyme. This is RNase aCSPSF2 from Saccharolobus solfataricus (strain ATCC 35092 / DSM 1617 / JCM 11322 / P2) (Sulfolobus solfataricus).